A 519-amino-acid polypeptide reads, in one-letter code: MAPQERLLIRGGRVVNDDFSQVADVLVEDGVVRALGRDLLPPGDTSRGLRILDAAGKLVLPGGIDTHTHMQFPFMGSQSVDDFHQGTKAALAGGTTMIIDFAIPQKGSSLIEAFETWRNWADPKVCCDYSLHVAVTWWSDKVKEEMKTLAQDKGVNSFKMFMAYKDLYMVQDQQMYAAFSQCKEIGAIAQVHAENGDLIAEGAKKMLALGITGPEGHELCRPEAVEAEATLRAITIASAVNCPLYIVHVMSKSAAKVIADAKREGKVVYGEPIAAGLGTDGTQYWNKEWRHAAHHVMGPPLRPDPSTPGFLMNLLANGDLTTTGSDNCTFNTCQKALGKDDFTKIPNGVNGVEDRMSVIWEKGVHSGKMDENRFVAVTSTNAAKIFNLYPKKGRIAVGSDADIVIWDPEATRTISAKTHHQAVNFNIFEGMVCHGVPLVTISRGRVVYEAGVFDVTAGHGKFIPRQPFAEFIYKRVKQRDQTCTPIPVKRAPYKGEVITLKPRETKEDDTAGTRMQGHS.

Zn(2+) is bound by residues His67 and His69. Ser79 carries the post-translational modification Phosphoserine. Lys159 provides a ligand contact to Zn(2+). Lys159 carries the post-translational modification N6-carboxylysine. Tyr164 lines the substrate pocket. Residues His192 and His248 each contribute to the Zn(2+) site. Lys256 bears the N6-succinyllysine mark. Asp326 contributes to the Zn(2+) binding site. A substrate-binding site is contributed by Asn347. Position 510 is a phosphothreonine (Thr510).

The protein belongs to the metallo-dependent hydrolases superfamily. Hydantoinase/dihydropyrimidinase family. In terms of assembly, homotetramer. Zn(2+) serves as cofactor. Post-translationally, carboxylation allows a single lysine to coordinate two zinc ions.

It catalyses the reaction 5,6-dihydrouracil + H2O = 3-(carbamoylamino)propanoate + H(+). Functionally, catalyzes the second step of the reductive pyrimidine degradation, the reversible hydrolytic ring opening of dihydropyrimidines. Can catalyze the ring opening of 5,6-dihydrouracil to N-carbamyl-alanine and of 5,6-dihydrothymine to N-carbamyl-amino isobutyrate. The chain is Dihydropyrimidinase (Dpys) from Rattus norvegicus (Rat).